A 432-amino-acid polypeptide reads, in one-letter code: Patatin-like phospholipase domain-containing protein 5 (432 aa).

The 170-residue stretch at 12-181 folds into the PNPLA domain; sequence LSFSGSGYMG…SNNLPFSDCP (170 aa). The GXGXXG signature appears at 16–21; sequence GSGYMG. The short motif at 47 to 51 is the GXSXG element; sequence GSSSG. Ser49 functions as the Nucleophile in the catalytic mechanism. Asp168 (proton acceptor) is an active-site residue. A DGA/G motif is present at residues 168 to 170; sequence DGA. The tract at residues 404–423 is disordered; that stretch reads ADSGLLRQQRGTAPSGNRPL.

The catalysed reaction is a triacylglycerol + H2O = a diacylglycerol + a fatty acid + H(+). Its function is as follows. Has abundant triacylglycerol lipase activity. The sequence is that of Patatin-like phospholipase domain-containing protein 5 from Mus musculus (Mouse).